The sequence spans 150 residues: Small ribosomal subunit protein eS19 (150 aa).

Belongs to the eukaryotic ribosomal protein eS19 family. In terms of assembly, part of the 30S ribosomal subunit.

Functionally, may be involved in maturation of the 30S ribosomal subunit. The polypeptide is Small ribosomal subunit protein eS19 (Thermoplasma volcanium (strain ATCC 51530 / DSM 4299 / JCM 9571 / NBRC 15438 / GSS1)).